A 77-amino-acid chain; its full sequence is Small ribosomal subunit protein uS17 (77 aa).

This sequence belongs to the universal ribosomal protein uS17 family. In terms of assembly, part of the 30S ribosomal subunit.

Its function is as follows. One of the primary rRNA binding proteins, it binds specifically to the 5'-end of 16S ribosomal RNA. The protein is Small ribosomal subunit protein uS17 of Rickettsia akari (strain Hartford).